A 446-amino-acid chain; its full sequence is Citrate/sodium symporter (446 aa).

The Cytoplasmic segment spans residues 1 to 27 (MTNMSQPPATEKKGVSDLLGFKIFGMP). A helical membrane pass occupies residues 28 to 44 (LPLYAFALITLLLSHFY). Topologically, residues 45 to 50 (NALPTD) are periplasmic. The chain crosses the membrane as a helical span at residues 51-71 (IVGGFAIMFIIGAIFGEIGKR). Over 72 to 80 (LPIFNKYIG) the chain is Cytoplasmic. The helical transmembrane segment at 81–95 (GAPVMIFLVAAYFVY) threads the bilayer. Over 96–115 (AGIFTQKEIDAISNVMDKSN) the chain is Periplasmic. A helical membrane pass occupies residues 116 to 130 (FLNLFIAVLITGAIL). Over 131–136 (SVNRRL) the chain is Cytoplasmic. A helical transmembrane segment spans residues 137–166 (LLKSLLGYIPTILMGIVGASIFGIAIGLVF). The Periplasmic portion of the chain corresponds to 167–181 (GIPVDRIMMLYVLPI). Na(+) is bound by residues Ile-181 and Gly-183. An intramembrane region (helical) is located at residues 182-189 (MGGGNGAG). 2 residues coordinate citrate: Asn-186 and Gly-187. The Periplasmic portion of the chain corresponds to 190 to 212 (AVPLSEIYHSVTGRSREEYYSTA). The chain crosses the membrane as a helical span at residues 213–233 (IAILTIANIFAIVFAAVLDII). Over 234-264 (GKKHTWLSGEGELVRKASFKVEEDEKTGQIT) the chain is Cytoplasmic. The chain crosses the membrane as a helical span at residues 265 to 287 (HRETAVGLVLSTTCFLLAYVVAK). Residues 288 to 299 (KILPSIGGVAIH) lie on the Periplasmic side of the membrane. The helical transmembrane segment at 300-315 (YFAWMVLIVAALNASG) threads the bilayer. Residues 316-327 (LCSPEIKAGAKR) lie on the Cytoplasmic side of the membrane. Residues 328-351 (LSDFFSKQLLWVLMVGVGVCYTDL) form a helical membrane-spanning segment. Over 352–359 (QEIINAIT) the chain is Periplasmic. Residues 360–381 (FANVVIAAIIVIGAVLGAAIGG) traverse the membrane as a helical segment. At 382-398 (WLMGFFPIESAITAGLC) the chain is on the cytoplasmic side. Positions 399 and 401 each coordinate Na(+). The helical intramembrane region spans 399–406 (MANRGGSG). Citrate-binding residues include Arg-402, Gly-404, and Ser-405. The Cytoplasmic portion of the chain corresponds to 407-416 (DLEVLSACNR). The chain crosses the membrane as a helical span at residues 417–438 (MNLISYAQISSRLGGGIVLVIA). Arg-428 is a binding site for citrate. Residues 439-446 (SIVFGMMI) are Periplasmic-facing.

This sequence belongs to the 2-hydroxycarboxylate transporter (2-HCT) (TC 2.A.24) family. Homodimer.

The protein localises to the cell inner membrane. The enzyme catalyses citrate(out) + 2 Na(+)(out) = citrate(in) + 2 Na(+)(in). In the absence of Na(+), transport is inhibited by the thiol reagents N-ethylmaleimide (NEM) and the methanethiosulfonate (MTS) derivatives MTSEA, MTSET and MTSES. However, inactivation by NEM, MTSES and MTSET is prevented by the presence of Na(+). In the absence of Na(+), the substrate citrate has no effect on the inactivation by permeable or impermeable thiol reagents. In contrast, when subsaturating concentrations of Na(+) are present, citrate significantly reduces inactivation, suggesting ordered binding of the substrate and co-ion; citrate is bound after Na(+). The membrane impermeable bulky maleimide AmdiS does not inactivate the transporter in right-side-out membrane vesicles. The apparent affinity for Na(+) decreases with increasing proton concentration. Protons cannot replace Na(+) in the translocation step but the decrease in apparent affinity for Na(+) towards lower pH suggests that protons can compete with Na(+) for the cation-binding sites. In terms of biological role, secondary active transporter that catalyzes the uptake of citrate across the membrane with the concomitant uptake of sodium. There are conflicting data regarding exact substrate stoichiometry: the sodium/citrate stoichiometry was predicted to be 1, but the latest studies suggest that CitS transports citrate in symport with 2 sodium ions. Transports citrate as a divalent citrate anion, H-citrate(2-). Shows narrow substrate specificity and is very specific, transporting only citrate and to a low extent citromalate. Symport of Na(+) is absolutely required in the range pH 5-7 because no uptake can be detected in the absence of Na(+). Lithium can replace Na(+) in the symport reaction but it takes about a 200-fold higher concentration of Li(+) over Na(+) to achieve the same rate of uptake. This is Citrate/sodium symporter from Klebsiella pneumoniae.